The primary structure comprises 324 residues: CYFIP-related Rac1 interactor B (324 aa).

A lipid anchor (N-myristoyl glycine) is attached at glycine 2. Residue lysine 74 forms a Glycyl lysine isopeptide (Lys-Gly) (interchain with G-Cter in ubiquitin) linkage.

This sequence belongs to the CYRI family. Interacts with RAC1 (GTP-bound form preferentially). Ubiquitinated at Lys-74 upon Salmonella bacterial infection. As to expression, expressed in pancreatic ducts (at protein level).

It is found in the membrane. Its subcellular location is the mitochondrion. Negatively regulates RAC1 signaling and RAC1-driven cytoskeletal remodeling. Regulates chemotaxis, cell migration and epithelial polarization by controlling the polarity, plasticity, duration and extent of protrusions. Limits Rac1 mediated activation of the Scar/WAVE complex, focuses protrusion signals and regulates pseudopod complexity by inhibiting Scar/WAVE-induced actin polymerization. Protects against Salmonella bacterial infection. Attenuates processes such as macropinocytosis, phagocytosis and cell migration and restrict sopE-mediated bacterial entry. Also restricts infection mediated by Mycobacterium tuberculosis and Listeria monocytogenes. Involved in the regulation of mitochondrial dynamics and oxidative stress. The chain is CYFIP-related Rac1 interactor B (Cyrib) from Mus musculus (Mouse).